Reading from the N-terminus, the 548-residue chain is Leucine-rich repeat LGI family member 3 (548 aa).

An N-terminal signal peptide occupies residues 1–30 (MAGLRARRGPAPGLLALSALGFCLMLQVSA). The LRRNT domain maps to 31–64 (KRLPKTPPCPPSCSCTRDTAFCVDSKAVPRNLPS). 3 LRR repeats span residues 89–110 (LLQFLLLNSNKFTLIGDNAFTG), 113–134 (HLQYLFIENNDIWTLSKFTFRG), and 137–158 (SLTHLSLANNNLQTLPRDIFRP). The 51-residue stretch at 170 to 220 (NSLNCDCKVKWLVEWLAHTNTTVAPIYCASPPRFQEHKVQDLPLREFDCIT) folds into the LRRCT domain. A glycan (N-linked (GlcNAc...) asparagine) is linked at Asn-189. EAR repeat units follow at residues 222–264 (DFVL…KWDY) and 268–310 (QLRD…HWDP). N-linked (GlcNAc...) asparagine glycosylation occurs at Asn-311. EAR repeat units follow at residues 314 to 361 (RFTK…RWHQ), 363 to 406 (GFYS…QWSR), 410 to 453 (QFVA…RWEG), 455 to 497 (RFSE…QWDE), and 501 to 543 (KFVR…RHVV). Asn-394 carries an N-linked (GlcNAc...) asparagine glycan.

In terms of assembly, interacts with STX1A.

Its subcellular location is the secreted. The protein resides in the cytoplasmic vesicle. It is found in the secretory vesicle. The protein localises to the synaptic vesicle. It localises to the synapse. Its subcellular location is the synaptosome. Its function is as follows. May participate in the regulation of neuronal exocytosis. The polypeptide is Leucine-rich repeat LGI family member 3 (LGI3) (Macaca fascicularis (Crab-eating macaque)).